Here is a 97-residue protein sequence, read N- to C-terminus: Mitochondrial import inner membrane translocase subunit Tim8 A (97 aa).

Residues 43-66 (CWEKCMDKPGPKLDSRAEACFVNC) carry the Twin CX3C motif motif. 2 disulfides stabilise this stretch: C43-C66 and C47-C62. Phosphoserine occurs at positions 57, 87, 94, and 96.

Belongs to the small Tim family. Heterohexamer; composed of 3 copies of TIMM8A and 3 copies of TIMM13, named soluble 70 kDa complex. Associates with the TIM22 complex, whose core is composed of TIMM22.

Its subcellular location is the mitochondrion inner membrane. In terms of biological role, mitochondrial intermembrane chaperone that participates in the import and insertion of some multi-pass transmembrane proteins into the mitochondrial inner membrane. Also required for the transfer of beta-barrel precursors from the TOM complex to the sorting and assembly machinery (SAM complex) of the outer membrane. Acts as a chaperone-like protein that protects the hydrophobic precursors from aggregation and guide them through the mitochondrial intermembrane space. The TIMM8-TIMM13 complex mediates the import of proteins such as TIMM23, SLC25A12/ARALAR1 and SLC25A13/ARALAR2, while the predominant TIMM9-TIMM10 70 kDa complex mediates the import of much more proteins. This chain is Mitochondrial import inner membrane translocase subunit Tim8 A (TIMM8A), found in Bos taurus (Bovine).